The following is a 492-amino-acid chain: Transmembrane protein 104 homolog (492 aa).

The Cytoplasmic segment spans residues 1-18 (MQSNTDSSGTSGTYSQTV). Residues 19–39 (GLLYVFNLIVGTGALALPKAF) form a helical membrane-spanning segment. The Extracellular portion of the chain corresponds to 40 to 45 (QSAGWL). Residues 46 to 66 (LSISLLTFSAFMSYVAATFVI) form a helical membrane-spanning segment. Residues 67 to 114 (EALSVANAVLSKKRRVEYDDVVVADGPSTFEIAKKVEVSEMASMFLSK) lie on the Cytoplasmic side of the membrane. The chain crosses the membrane as a helical span at residues 115–135 (VSLVFSYFAIIIYLFGDLAIY). At 136–177 (STTVPKSAMNIVCSTINATIVKSSDPCHESWPEILTRMTVYR) the chain is on the extracellular side. N-linked (GlcNAc...) asparagine glycosylation occurs at Asn152. A helical membrane pass occupies residues 178–198 (FFVIVFVVVVCLPMVIAGITK). Residues 199–210 (TRHIQIMTTLSR) are Cytoplasmic-facing. The helical transmembrane segment at 211–231 (WAAFILMISLATMQLSSQGAA) threads the bilayer. Residues 232–238 (AHPPAYN) are Extracellular-facing. The chain crosses the membrane as a helical span at residues 239-259 (FHGFGSLFGCAVYAFMCHHSI). Topologically, residues 260–275 (PSLITPMRTKENVFGK) are cytoplasmic. The helical transmembrane segment at 276–296 (IAVVYGIVGVFYFTLSLTGAF) threads the bilayer. Residues 297–325 (AFEHVQDIYTLNFLHDDNTSLVYSIIDYF) are Extracellular-facing. A glycan (N-linked (GlcNAc...) asparagine) is linked at Asn314. The chain crosses the membrane as a helical span at residues 326 to 346 (LALFPIITLTSSYPIIALTLI). Residues 347–391 (NNFKVVKDILCPKTGQENESLLEADNQVEDNDTDDEREARNGNPK) lie on the Cytoplasmic side of the membrane. A compositionally biased stretch (acidic residues) spans 367 to 382 (LLEADNQVEDNDTDDE). Residues 367–387 (LLEADNQVEDNDTDDEREARN) form a disordered region. A helical transmembrane segment spans residues 392-412 (TIFDVLVPTLVLALPTFLSLL). At 413–415 (TDD) the chain is on the extracellular side. A helical transmembrane segment spans residues 416-436 (MLLLASITGSFPGVAVQFAIP). Residues 437-466 (CLLVTAARKHARSVLNFPVPRKNNSPFQSR) lie on the Cytoplasmic side of the membrane. A helical transmembrane segment spans residues 467 to 487 (FWIMLISSWAGFSMIMVLLNL). At 488 to 492 (VGVKF) the chain is on the extracellular side.

The protein belongs to the TMEM104 family.

The protein localises to the membrane. This is Transmembrane protein 104 homolog from Caenorhabditis briggsae.